We begin with the raw amino-acid sequence, 1706 residues long: Serine/threonine-protein kinase vps15 (1706 aa).

One can recognise a Protein kinase domain in the interval 24–293 (YHNERSLGDS…YLQKYRGTVF (270 aa)). Residues 30–38 (LGDSHFLRT) and Lys-52 contribute to the ATP site. Residues 56–94 (NKLPEISLSSIVNLLKEEQENISYRVPNAVPYIKTLVTL) form an HEAT 1 repeat. Asp-146 (proton acceptor) is an active-site residue. HEAT repeat units follow at residues 426–465 (LYGA…NICD), 466–504 (ESKL…NVTS), 511–549 (FLFQ…QASK), 587–625 (HDLV…FFGK), 626–664 (AKSN…FIGP), 665–703 (RSVD…LHLF), and 705–743 (KLVV…SFDD). Ser-957 is modified (phosphoserine). At Tyr-958 the chain carries Phosphotyrosine. The tract at residues 982–1099 (TTKPKDVSQS…GKSLAPLISS (118 aa)) is disordered. Basic and acidic residues-rich tracts occupy residues 984–1002 (KPKD…RESN) and 1014–1023 (DVYRQTDNPE). Residues 1029 to 1055 (DTASSKVDTHNPTVTQPTDDTGGLNSY) show a composition bias toward polar residues. Residues 1056–1069 (NTENPLLTNNTLEP) are compositionally biased toward low complexity. Residues 1079–1090 (KDSDKHAKESKG) are compositionally biased toward basic and acidic residues. WD repeat units follow at residues 1213–1252 (LLDG…RHIS) and 1368–1407 (LQCG…LSCS). Residues 1431 to 1442 (NEYTSGNNNSPV) show a composition bias toward polar residues. The interval 1431–1461 (NEYTSGNNNSPVTKVPGSSSTSSSSTQPINS) is disordered. Residues 1577 to 1622 (CISSPIYRYRGPSAGSVEREPLFLIAASGSPHAFIWNPHNVSASSS) form a WD 3 repeat.

It belongs to the protein kinase superfamily. Ser/Thr protein kinase family. In terms of assembly, component of the autophagy-specific vps34 PI3-kinase complex I composed of vps15, atg6, pik3/vps34, atg14 and atg38. Also a component of the vps34 PI3-kinase complex II composed of atg6, pik3, vps15 and vps38.

The catalysed reaction is L-seryl-[protein] + ATP = O-phospho-L-seryl-[protein] + ADP + H(+). It carries out the reaction L-threonyl-[protein] + ATP = O-phospho-L-threonyl-[protein] + ADP + H(+). Functions as a part of the autophagy-specific VPS34 PI3-kinase complex I that plays a role in autophagosome assembly. This complex is essential to recruit the atg8-phosphatidylinositol conjugate and the atg12-atg5 conjugate to the pre-autophagosomal structure. Also functions as part of the VPS34 PI3-kinase complex II. The sequence is that of Serine/threonine-protein kinase vps15 from Schizosaccharomyces pombe (strain 972 / ATCC 24843) (Fission yeast).